The sequence spans 491 residues: Probable diguanylate cyclase CdgI (491 aa).

The Cytoplasmic segment spans residues 1–54 (MIQSTRISMGLFFKYFLSLTKIDPGQNYISLPSIKSSTHIALLFMVSMGTQKLK). Residues 55-75 (AQSFFIFSLLLTLILFCITTL) form a helical membrane-spanning segment. At 76–89 (YNENTNVKLIPQMN) the chain is on the periplasmic side. A helical membrane pass occupies residues 90-110 (YLMVVVALFFLNAVIFLFMLM). Over 111-121 (KYFTNKQILPT) the chain is Cytoplasmic. The chain crosses the membrane as a helical span at residues 122–142 (LILSLAFLSGLIYLVETIVII). Residues 143–158 (HKPINGSTLIQTKSND) are Periplasmic-facing. The chain crosses the membrane as a helical span at residues 159–179 (VSIFYIFRQLSFICLTSLALF). Residues 180-193 (CYGKDNILDNNKKK) are Cytoplasmic-facing. The helical transmembrane segment at 194–214 (TGILLLALIPFLVFPLLAHNL) threads the bilayer. Residues 215-236 (SSYNADYSLYVVDYCPDNHTAT) lie on the Periplasmic side of the membrane. Residues 237–257 (WGINYTKILVCLWAFLLFFII) form a helical membrane-spanning segment. The Cytoplasmic segment spans residues 258-265 (MRTRLASE). Residues 266–286 (LWPLIALLCLASLCCNLLLLT) form a helical membrane-spanning segment. Residues 287 to 293 (LDEYNYT) are Periplasmic-facing. A helical membrane pass occupies residues 294–314 (IWYISRGIEVSSKLFVVSFLI). Residues 315 to 491 (YNIFQELQLS…GGNKVIIHHI (177 aa)) lie on the Cytoplasmic side of the membrane. A GGDEF domain is found at 356–491 (KDFCVMLVDI…GGNKVIIHHI (136 aa)). Positions 364 and 365 each coordinate Mg(2+). Substrate is bound by residues Asn-372, His-377, and Asp-381. Glu-407 lines the Mg(2+) pocket. Catalysis depends on Glu-407, which acts as the Proton acceptor. Arg-427 lines the substrate pocket.

Homodimer. It depends on Mg(2+) as a cofactor.

It is found in the cell inner membrane. The enzyme catalyses 2 GTP = 3',3'-c-di-GMP + 2 diphosphate. It participates in purine metabolism; 3',5'-cyclic di-GMP biosynthesis. In terms of biological role, catalyzes the synthesis of cyclic-di-GMP (c-di-GMP) via the condensation of 2 GTP molecules. The chain is Probable diguanylate cyclase CdgI from Escherichia coli (strain K12).